Reading from the N-terminus, the 201-residue chain is Small ribosomal subunit protein uS4c (201 aa).

The region spanning 91–151 (MRLDNIIFQL…TKNPEELRTI (61 aa)) is the S4 RNA-binding domain.

It belongs to the universal ribosomal protein uS4 family. As to quaternary structure, part of the 30S ribosomal subunit. Contacts protein S5. The interaction surface between S4 and S5 is involved in control of translational fidelity.

It is found in the plastid. It localises to the chloroplast. In terms of biological role, one of the primary rRNA binding proteins, it binds directly to 16S rRNA where it nucleates assembly of the body of the 30S subunit. Functionally, with S5 and S12 plays an important role in translational accuracy. This chain is Small ribosomal subunit protein uS4c (rps4), found in Welwitschia mirabilis (Tree tumbo).